The following is a 340-amino-acid chain: MDYQDAGVNIEAGRSFVDKIRRSVESTYNAQVLGGLGGFGGYFELPTGYENPVLVSGTDGVGTKLKIAQALNRHQTIGIDLVAMCVNDILTSGAKPLFFLDYLATGKLNPQQLSDVVTGIVEGCHLSDCALLGGETAEMPGFYGVGEYDVAGFCVGVVEKANLLDGSQINIGDVAIGLSSSGVHSNGFSLVRKIVEVNGLSWGDRFESLGNQTLGEVLLTPTQIYVKPILEALKSGIEIKGMAHITGGGLPENLPRCLNNNQSIKINSESWSILPIFQWIANMGNVATAAMFDTFNMGIGFVIIVPKNQGKTSIEWLKSQGISAYEIGEVIEGNRELVGL.

This sequence belongs to the AIR synthase family.

It localises to the cytoplasm. The enzyme catalyses 2-formamido-N(1)-(5-O-phospho-beta-D-ribosyl)acetamidine + ATP = 5-amino-1-(5-phospho-beta-D-ribosyl)imidazole + ADP + phosphate + H(+). It participates in purine metabolism; IMP biosynthesis via de novo pathway; 5-amino-1-(5-phospho-D-ribosyl)imidazole from N(2)-formyl-N(1)-(5-phospho-D-ribosyl)glycinamide: step 2/2. The protein is Phosphoribosylformylglycinamidine cyclo-ligase of Crocosphaera subtropica (strain ATCC 51142 / BH68) (Cyanothece sp. (strain ATCC 51142)).